The following is a 492-amino-acid chain: MTLWINGDWITGQGASRVKRNPVSGEVLWQGNDAGAAQVEQACRAARAAFPRWARLSLAERQVVVERFAGLLESNKAELTAIIARETGKPRWEAATEVTAMINKIAISIKAYHVRTGEQRSEMPDGAASLRHRPHGVLAVFGPYNFPGHLPNGHIVPALLAGNTIIFKPSELTPWSGEAVMRLWQQAGLPPGVLNLVQGGRETGQALSALEDLDGLLFTGSANTGYQLHRQLSGQPEKILALEMGGNNPLIIDEVADIDAAVHLTIQSAFVTAGQRCTCARRLLLKSGAQGDAFLARLVAVSQRLTPGNWDDEPQPFIGGLISEQAAQQVVTAWQQLEAMGGRTLLAPRLLQSETSLLTPGIIEMTGVAGVPDEEVFGPLLRVWRYDSFEEAILMANNTRFGLSCGLVSPEREKFDQLLLEARAGIVNWNKPLTGAASTAPFGGIGASGNHRPSAWYAADYCAWPMASLESDSLTLPATLNPGLDFSDEVVR.

An NAD(+)-binding site is contributed by 220 to 225; sequence GSANTG. Catalysis depends on residues E243 and C277.

The protein belongs to the aldehyde dehydrogenase family. AstD subfamily.

It carries out the reaction N-succinyl-L-glutamate 5-semialdehyde + NAD(+) + H2O = N-succinyl-L-glutamate + NADH + 2 H(+). Its pathway is amino-acid degradation; L-arginine degradation via AST pathway; L-glutamate and succinate from L-arginine: step 4/5. Catalyzes the NAD-dependent reduction of succinylglutamate semialdehyde into succinylglutamate. This chain is N-succinylglutamate 5-semialdehyde dehydrogenase, found in Escherichia coli O9:H4 (strain HS).